A 592-amino-acid polypeptide reads, in one-letter code: Membrane protein insertase YidC (592 aa).

5 consecutive transmembrane segments (helical) span residues 8–28 (LFIALGLILVILTGYQMFVMG), 363–385 (ALGQFGLAILALTLMVKIVMFPL), 430–450 (INPLAGCLPILPQIPIFFALY), 493–513 (IWLIGGVLGIGAWPIIMGLTM), and 531–551 (IFAFLPIVFTFILAPFAAGLV).

The protein belongs to the OXA1/ALB3/YidC family. Type 1 subfamily. Interacts with the Sec translocase complex via SecD. Specifically interacts with transmembrane segments of nascent integral membrane proteins during membrane integration.

The protein resides in the cell inner membrane. Required for the insertion and/or proper folding and/or complex formation of integral membrane proteins into the membrane. Involved in integration of membrane proteins that insert both dependently and independently of the Sec translocase complex, as well as at least some lipoproteins. Aids folding of multispanning membrane proteins. The sequence is that of Membrane protein insertase YidC from Maricaulis maris (strain MCS10) (Caulobacter maris).